The sequence spans 400 residues: Pyruvate dehydrogenase E1 component subunit beta-4, chloroplastic (400 aa).

Residues Met-1–Arg-34 form a disordered region. A chloroplast-targeting transit peptide spans Met-1–Arg-57. Low complexity predominate over residues Ala-9–Arg-34. Thiamine diphosphate is bound at residue Glu-136. Ile-189, Ala-237, Ile-238, and Asn-242 together coordinate K(+).

In terms of assembly, tetramer of 2 alpha and 2 beta subunits. The cofactor is thiamine diphosphate.

It localises to the plastid. The protein localises to the chloroplast. The enzyme catalyses N(6)-[(R)-lipoyl]-L-lysyl-[protein] + pyruvate + H(+) = N(6)-[(R)-S(8)-acetyldihydrolipoyl]-L-lysyl-[protein] + CO2. The pyruvate dehydrogenase complex catalyzes the overall conversion of pyruvate to acetyl-CoA and CO(2). It contains multiple copies of three enzymatic components: pyruvate dehydrogenase (E1), dihydrolipoamide acetyltransferase (E2) and lipoamide dehydrogenase (E3). The chain is Pyruvate dehydrogenase E1 component subunit beta-4, chloroplastic from Oryza sativa subsp. japonica (Rice).